Here is a 377-residue protein sequence, read N- to C-terminus: Enoyl reductase cheB (377 aa).

The interval 18 to 361 (GGSLVIARDV…REISAEKLVV (344 aa)) is enoyl reductase (ER) domain. 49–52 (CDFK) contributes to the NADP(+) binding site. Position 137 to 144 (137 to 144 (PCCIATMG)) interacts with substrate. Residues 173–176 (SSSV), 200–203 (SPKN), Tyr-218, 265–266 (LE), and Thr-283 each bind NADP(+). A substrate-binding site is contributed by 285 to 289 (GAIII). 354 to 355 (IS) provides a ligand contact to NADP(+).

The protein belongs to the zinc-containing alcohol dehydrogenase family. Requires heme as cofactor.

It functions in the pathway secondary metabolite biosynthesis. Functionally, enoyl reductase; part of the gene cluster that mediates the biosynthesis of chaetoglobosin A which has a unique inhibitory activity against actin polymerization in mammalian cells. Chaetoglobosin A and its intermediates are involved in the morphological differentiation of C.globosum. The first step of the pathway is the synthesis of prochaetoglobosin I via condensation of one acetyl-CoA, 8 malonyl-CoA, and a L-tryptophan molecule by the PKS-NRPS hybrid synthetase cheA, followed by reduction of backbone double bond to install desired geometry by the enoyl reductase cheB. Further multiple oxidation steps performed by the cytochrome P450 monooxygenases cheE and cheG, as well as by the FAD-linked oxidoreductase cheF, lead to the formation of chaetoglobosin A. Depending on the order of action of these reductases, distinct intermediates can be identified. Within the pathway, the cytochrome P450 monooxygenase cheE catalyzes a stereospecific epoxidation on prochaetoglobosin I, cytoglobosin D, and chaetoglobosin J intermediates. The FAD-linked oxidoreductase cheF performs dehydrogenation of the C-20 hydroxyl groups in the 20-dihyrochaetoglobosin A and cytoglobosin D intermediates. Finally, the cytochrome P450 monooxygenase cheG can catalyze the stereospecific dihydroxylation of prochaetoglobosin I and prochaetoglobosin IV at C-19 and C-20, respectively. The Diels-Alderase cheD may play a role in the post-PKS-NRPS biosynthetic steps catalyzing Diels-Alder cyclization. This chain is Enoyl reductase cheB, found in Chaetomium globosum (strain ATCC 6205 / CBS 148.51 / DSM 1962 / NBRC 6347 / NRRL 1970) (Soil fungus).